The following is an 886-amino-acid chain: DNA mismatch repair protein MutS (886 aa).

An ATP-binding site is contributed by 626–633; it reads GPNMGGKS.

The protein belongs to the DNA mismatch repair MutS family.

Its function is as follows. This protein is involved in the repair of mismatches in DNA. It is possible that it carries out the mismatch recognition step. This protein has a weak ATPase activity. The polypeptide is DNA mismatch repair protein MutS (Burkholderia ambifaria (strain ATCC BAA-244 / DSM 16087 / CCUG 44356 / LMG 19182 / AMMD) (Burkholderia cepacia (strain AMMD))).